An 805-amino-acid polypeptide reads, in one-letter code: Ubiquitin carboxyl-terminal hydrolase 10 (805 aa).

Residues aspartate 139–tyrosine 170 are disordered. Positions asparagine 143 to glycine 153 are enriched in polar residues. Residues arginine 422 to valine 802 enclose the USP domain. The Nucleophile role is filled by cysteine 431. Positions histidine 561–arginine 593 are disordered. The span at valine 569–glutamine 580 shows a compositional bias: basic and acidic residues. Catalysis depends on histidine 756, which acts as the Proton acceptor.

This sequence belongs to the peptidase C19 family. USP10 subfamily.

The protein resides in the cytoplasm. Its subcellular location is the nucleus. The enzyme catalyses Thiol-dependent hydrolysis of ester, thioester, amide, peptide and isopeptide bonds formed by the C-terminal Gly of ubiquitin (a 76-residue protein attached to proteins as an intracellular targeting signal).. Its function is as follows. Hydrolase that can remove conjugated ubiquitin from target proteins such as p53/tp53, rps2/us5, rps3/us3, rps10/eS10, becn1, snx3 and cftr. Acts as an essential regulator of p53/tp53 stability: in unstressed cells, specifically deubiquitinates p53/tp53 in the cytoplasm, leading to counteracts MDM2 action and stabilize p53/tp53. Following DNA damage, translocates to the nucleus and deubiquitinates p53/tp53, leading to regulate the p53/TP53-dependent DNA damage response. Component of a regulatory loop that controls autophagy and p53/tp53 levels. Plays a key role in 40S ribosome subunit recycling when a ribosome has stalled during translation: acts both by inhibiting formation of stress granules, which store stalled translation pre-initiation complexes, and mediating deubiquitination of 40S ribosome subunits. Deubiquitinates cftr in early endosomes, enhancing its endocytic recycling. In Xenopus tropicalis (Western clawed frog), this protein is Ubiquitin carboxyl-terminal hydrolase 10 (usp10).